The following is a 110-amino-acid chain: N(4)-acetylcytidine amidohydrolase (110 aa).

The ASCH domain occupies 6–93 (TFFERFEQDI…IQEIYPGLEQ (88 aa)). The active-site Proton acceptor is K20. T23 (nucleophile) is an active-site residue. E73 (proton donor) is an active-site residue.

This sequence belongs to the N(4)-acetylcytidine amidohydrolase family.

It catalyses the reaction N(4)-acetylcytidine + H2O = cytidine + acetate + H(+). The enzyme catalyses N(4)-acetyl-2'-deoxycytidine + H2O = 2'-deoxycytidine + acetate + H(+). The catalysed reaction is N(4)-acetylcytosine + H2O = cytosine + acetate + H(+). In terms of biological role, catalyzes the hydrolysis of N(4)-acetylcytidine (ac4C). This Shewanella sp. (strain ANA-3) protein is N(4)-acetylcytidine amidohydrolase.